The chain runs to 257 residues: MDRIIEKLDHGWWVVSHEQKLWLPKGELPYGEAANFDLVGQRALQIGEWQGEPVWLIQQQRRHDMGSVRQVIDLDVGLFQLAGRGVQLAEFYRSHKYCGYCGHEMYPSKTEWAMLCSHCRERYYPQIAPCIIVAIRRDDSLLLAQHTRHRNGVHTVLAGFVEVGETLEQAVAREVMEESGIKVKNLRYVTSQPWPFPQSLMTAFMAEYDSGDIVIDPKELLEANWYRYDDLPLLPPPGTVARRLIEDTVAMCRAEYE.

Substrate-binding residues include lysine 25 and arginine 69. Positions 98 and 101 each coordinate Zn(2+). A substrate-binding site is contributed by glutamate 111. Residues cysteine 116 and cysteine 119 each coordinate Zn(2+). A substrate-binding site is contributed by tyrosine 124. Positions 125–248 constitute a Nudix hydrolase domain; sequence PQIAPCIIVA…TVARRLIEDT (124 aa). A divalent metal cation-binding residues include alanine 158, glutamate 174, and glutamate 178. The Nudix box motif lies at 159–180; that stretch reads GFVEVGETLEQAVAREVMEESG. 192–199 contributes to the substrate binding site; sequence QPWPFPQS. Position 219 (glutamate 219) interacts with a divalent metal cation. Residue alanine 241 coordinates substrate.

This sequence belongs to the Nudix hydrolase family. NudC subfamily. As to quaternary structure, homodimer. Requires Mg(2+) as cofactor. It depends on Mn(2+) as a cofactor. The cofactor is Zn(2+).

The enzyme catalyses a 5'-end NAD(+)-phospho-ribonucleoside in mRNA + H2O = a 5'-end phospho-adenosine-phospho-ribonucleoside in mRNA + beta-nicotinamide D-ribonucleotide + 2 H(+). The catalysed reaction is NAD(+) + H2O = beta-nicotinamide D-ribonucleotide + AMP + 2 H(+). It catalyses the reaction NADH + H2O = reduced beta-nicotinamide D-ribonucleotide + AMP + 2 H(+). Its function is as follows. mRNA decapping enzyme that specifically removes the nicotinamide adenine dinucleotide (NAD) cap from a subset of mRNAs by hydrolyzing the diphosphate linkage to produce nicotinamide mononucleotide (NMN) and 5' monophosphate mRNA. The NAD-cap is present at the 5'-end of some mRNAs and stabilizes RNA against 5'-processing. Has preference for mRNAs with a 5'-end purine. Catalyzes the hydrolysis of a broad range of dinucleotide pyrophosphates. The polypeptide is NAD-capped RNA hydrolase NudC (Shigella flexneri).